We begin with the raw amino-acid sequence, 338 residues long: Cytochrome f (338 aa).

Positions Met-1–Ala-45 are cleaved as a signal peptide. Heme-binding residues include Tyr-46, Cys-66, Cys-69, and His-70. The chain crosses the membrane as a helical span at residues Ile-300–Lys-316.

Belongs to the cytochrome f family. As to quaternary structure, the 4 large subunits of the cytochrome b6-f complex are cytochrome b6, subunit IV (17 kDa polypeptide, PetD), cytochrome f and the Rieske protein, while the 4 small subunits are PetG, PetL, PetM and PetN. The complex functions as a dimer. Heme is required as a cofactor.

The protein localises to the cellular thylakoid membrane. Its function is as follows. Component of the cytochrome b6-f complex, which mediates electron transfer between photosystem II (PSII) and photosystem I (PSI), cyclic electron flow around PSI, and state transitions. The sequence is that of Cytochrome f (petA) from Leptolyngbya laminosa (Phormidium laminosum).